Reading from the N-terminus, the 211-residue chain is FMN-dependent NADH:quinone oxidoreductase 3 (211 aa).

102 to 105 contributes to the FMN binding site; it reads MWNF.

It belongs to the azoreductase type 1 family. As to quaternary structure, homodimer. The cofactor is FMN.

It carries out the reaction 2 a quinone + NADH + H(+) = 2 a 1,4-benzosemiquinone + NAD(+). It catalyses the reaction N,N-dimethyl-1,4-phenylenediamine + anthranilate + 2 NAD(+) = 2-(4-dimethylaminophenyl)diazenylbenzoate + 2 NADH + 2 H(+). Its function is as follows. Quinone reductase that provides resistance to thiol-specific stress caused by electrophilic quinones. Also exhibits azoreductase activity. Catalyzes the reductive cleavage of the azo bond in aromatic azo compounds to the corresponding amines. The polypeptide is FMN-dependent NADH:quinone oxidoreductase 3 (Bacillus cereus (strain ATCC 10987 / NRS 248)).